Here is a 1028-residue protein sequence, read N- to C-terminus: Unconventional myosin-Ic (1028 aa).

Residue methionine 1 is modified to N-acetylmethionine. Residues 12 to 696 form the Myosin motor domain; that stretch reads GVQDFVLLEN…TLFATEDALE (685 aa). ATP contacts are provided by residues asparagine 53, tyrosine 61, 104-113, and 157-161; these read SGESGAGKTE and NDNSS. Lysine 348 is modified (N6-methyllysine). Residues 573-595 are actin-binding; the sequence is LSKLMEILMSKQPSYVRCIKPND. 2 IQ domains span residues 699–728 and 722–751; these read KHSI…SAVE and MKHS…AVDV. Positions 850–1024 constitute a TH1 domain; the sequence is KDNYPQSVPR…NGHLSVVAPR (175 aa).

Belongs to the TRAFAC class myosin-kinesin ATPase superfamily. Myosin family. As to quaternary structure, interacts (via its IQ motifs) with calmodulin. Expressed in brain and the sacculus of the internal ear.

It is found in the cytoplasm. The protein resides in the cell membrane. The protein localises to the cell projection. Its subcellular location is the ruffle membrane. It localises to the cytoplasmic vesicle. It is found in the stereocilium membrane. Its function is as follows. Myosins are actin-based motor molecules with ATPase activity. Unconventional myosins serve in intracellular movements. Their highly divergent tails are presumed to bind to membranous compartments, which would be moved relative to actin filaments. The polypeptide is Unconventional myosin-Ic (Myo1c) (Aquarana catesbeiana (American bullfrog)).